A 188-amino-acid chain; its full sequence is GTPase KRas (188 aa).

Residues 10–18 (GAGGVGKSA), 29–35 (VDEYDPT), 59–60 (AG), and 116–119 (NKCD) contribute to the GTP site. Residues 32-40 (YDPTIEDSY) carry the Effector region motif. The tract at residues 167–188 (KEKMSKEGKKKKKKSKTKCILM) is disordered. At C185 the chain carries Cysteine methyl ester. C185 carries the S-farnesyl cysteine lipid modification. The propeptide at 186–188 (ILM) is removed in mature form.

This sequence belongs to the small GTPase superfamily. Ras family.

The protein localises to the cell membrane. The protein resides in the cytoplasm. It carries out the reaction GTP + H2O = GDP + phosphate + H(+). With respect to regulation, alternates between an inactive form bound to GDP and an active form bound to GTP. Activated by a guanine nucleotide-exchange factor (GEF) and inactivated by a GTPase-activating protein (GAP). In terms of biological role, ras proteins bind GDP/GTP and possess intrinsic GTPase activity. Plays an important role in the regulation of cell proliferation. The sequence is that of GTPase KRas (kras1) from Oryzias latipes (Japanese rice fish).